A 729-amino-acid polypeptide reads, in one-letter code: NAD(P)H-quinone oxidoreductase subunit 5, chloroplastic (729 aa).

The next 18 helical transmembrane spans lie at 9–29, 39–59, 87–107, 125–145, 147–167, 184–204, 218–238, 258–278, 289–311, 327–347, 354–374, 395–415, 425–445, 540–560, 592–612, 627–646, 676–696, and 708–728; these read WIIPLCPLIASCCTGSLSFFF, LCALLNVFSLAISMFVSLAIF, FLVDSLTLVMSLLVTTVGVLV, YAYLSLFTASMLGLVLSPNLI, LYVFWELVGMCSYLLVGFWFA, IGDFGLLLGILGIYWTTGSFE, IGFSNPILTNIIAFLLLAGPV, TPISALIHAATMVAAGIFFIA, LVMQASSWLGGATALLGATLALA, LGYMVLALGIGAYQSALFHLV, ALLFLGAGSVIHSIEKVVGYS, GTTFLLGTLSLSGIPPLACFW, WLSSLPLGILASGTAGLTAFY, FSLVMLAIPTTLVGLLGINLI, ILLNSRSSLILSFFGIFFSFI, LVGFTKLVSKFGLLVQSWSL, YGIDGFVNVIGALNFFGGEFI, and LFIIIFGAILSSVLIFIFLPF.

Belongs to the complex I subunit 5 family. NDH is composed of at least 16 different subunits, 5 of which are encoded in the nucleus.

The protein localises to the plastid. It is found in the chloroplast thylakoid membrane. The enzyme catalyses a plastoquinone + NADH + (n+1) H(+)(in) = a plastoquinol + NAD(+) + n H(+)(out). It catalyses the reaction a plastoquinone + NADPH + (n+1) H(+)(in) = a plastoquinol + NADP(+) + n H(+)(out). Functionally, NDH shuttles electrons from NAD(P)H:plastoquinone, via FMN and iron-sulfur (Fe-S) centers, to quinones in the photosynthetic chain and possibly in a chloroplast respiratory chain. The immediate electron acceptor for the enzyme in this species is believed to be plastoquinone. Couples the redox reaction to proton translocation, and thus conserves the redox energy in a proton gradient. This Adiantum capillus-veneris (Maidenhair fern) protein is NAD(P)H-quinone oxidoreductase subunit 5, chloroplastic (ndhF).